The following is a 211-amino-acid chain: Redox-sensing transcriptional repressor Rex (211 aa).

Residues 13–52 (TYLRILEELEAQGVHRTSSEQLGELAQVTAFQVRKDLSYF) constitute a DNA-binding region (H-T-H motif). Position 87-92 (87-92 (GMGRLG)) interacts with NAD(+).

The protein belongs to the transcriptional regulatory Rex family. As to quaternary structure, homodimer.

It is found in the cytoplasm. Functionally, modulates transcription in response to changes in cellular NADH/NAD(+) redox state. The polypeptide is Redox-sensing transcriptional repressor Rex (Thermus aquaticus).